An 806-amino-acid chain; its full sequence is Centrosomal protein of 85 kDa-like (806 aa).

Disordered stretches follow at residues 1–27, 51–89, and 101–146; these read MWGRFLAPEAGGRDSPSGARSFPAGSD, NNHLRRHSITSDSGDTGIGTSCSDSVEDHSTSSGTLSFK, and HVMP…SSLD. Position 15 is a phosphoserine (Ser-15). Residues 60–74 are compositionally biased toward polar residues; the sequence is TSDSGDTGIGTSCSD. The segment covering 135-146 has biased composition (basic and acidic residues); the sequence is DHSRGERDSSLD. Ser-207 bears the Phosphoserine mark. The interval 308-353 is disordered; that stretch reads PLEGRTTDDSYSLAPWQQPQTEEFQQGSETPMQVLTGSSRQSYSPP. Over residues 322-351 the composition is skewed to polar residues; sequence PWQQPQTEEFQQGSETPMQVLTGSSRQSYS. Residues 442-644 are a coiled coil; sequence QEELEQKLAS…ILEIQSMQGK (203 aa).

It belongs to the CEP85 family.

Its subcellular location is the cytoplasm. It localises to the cytoskeleton. It is found in the microtubule organizing center. The protein resides in the centrosome. Functionally, plays an essential role in neuronal cell migration. This Mus musculus (Mouse) protein is Centrosomal protein of 85 kDa-like.